Reading from the N-terminus, the 115-residue chain is Ribonuclease P protein component (115 aa).

This sequence belongs to the RnpA family. Consists of a catalytic RNA component (M1 or rnpB) and a protein subunit.

The enzyme catalyses Endonucleolytic cleavage of RNA, removing 5'-extranucleotides from tRNA precursor.. Functionally, RNaseP catalyzes the removal of the 5'-leader sequence from pre-tRNA to produce the mature 5'-terminus. It can also cleave other RNA substrates such as 4.5S RNA. The protein component plays an auxiliary but essential role in vivo by binding to the 5'-leader sequence and broadening the substrate specificity of the ribozyme. The polypeptide is Ribonuclease P protein component (Bacillus cereus (strain AH187)).